We begin with the raw amino-acid sequence, 583 residues long: Ras-specific guanine nucleotide-releasing factor RalGPS2 (583 aa).

The region spanning 49 to 287 (TPEEYAGQIT…YKLSLKIEPG (239 aa)) is the Ras-GEF domain. Residues 283–314 (KIEPGTSTPRSAASREDLVGPEVGASPQSGRK) form a disordered region. Phosphoserine occurs at positions 293, 296, 308, and 311. A PXXP motif is present at residues 324 to 327 (PQTP). Threonine 326 carries the phosphothreonine modification. 2 positions are modified to phosphoserine: serine 329 and serine 343. The residue at position 361 (threonine 361) is a Phosphothreonine. The tract at residues 372–406 (DDSVMEPHAPSRGQAESSTLSSGISIGSSDGSELS) is disordered. Serine 374 bears the Phosphoserine mark. Residues 387-403 (ESSTLSSGISIGSSDGS) show a composition bias toward low complexity. A Phosphoserine modification is found at serine 422. One can recognise a PH domain in the interval 457-569 (AVTIQGVLRR…WFKHLSAACQ (113 aa)). Positions 459-583 (TIQGVLRRKT…QVPTNLMTFE (125 aa)) are required for stimulation of nucleotide exchange by RALA.

As to quaternary structure, interacts with the SH3 domains of GRB2 and PLCG1. Interacts with RALA.

It is found in the cytoplasm. The protein resides in the cell membrane. In terms of biological role, guanine nucleotide exchange factor for the small GTPase RALA. May be involved in cytoskeletal organization. May also be involved in the stimulation of transcription in a Ras-independent fashion. In Homo sapiens (Human), this protein is Ras-specific guanine nucleotide-releasing factor RalGPS2 (RALGPS2).